Here is a 360-residue protein sequence, read N- to C-terminus: 3-dehydroquinate synthase (360 aa).

Residues 104 to 108 (GVIGD), 128 to 129 (TT), Lys-141, and 168 to 171 (FLDT) each bind NAD(+). Residues Glu-183, His-243, and His-260 each coordinate Zn(2+).

This sequence belongs to the sugar phosphate cyclases superfamily. Dehydroquinate synthase family. Co(2+) is required as a cofactor. Zn(2+) serves as cofactor. Requires NAD(+) as cofactor.

The protein resides in the cytoplasm. The catalysed reaction is 7-phospho-2-dehydro-3-deoxy-D-arabino-heptonate = 3-dehydroquinate + phosphate. The protein operates within metabolic intermediate biosynthesis; chorismate biosynthesis; chorismate from D-erythrose 4-phosphate and phosphoenolpyruvate: step 2/7. Functionally, catalyzes the conversion of 3-deoxy-D-arabino-heptulosonate 7-phosphate (DAHP) to dehydroquinate (DHQ). The chain is 3-dehydroquinate synthase from Streptococcus equi subsp. equi (strain 4047).